We begin with the raw amino-acid sequence, 220 residues long: Thymidylate kinase (220 aa).

10–17 contributes to the ATP binding site; sequence GIDGCGKS.

The protein belongs to the thymidylate kinase family.

The enzyme catalyses dTMP + ATP = dTDP + ADP. Phosphorylation of dTMP to form dTDP in both de novo and salvage pathways of dTTP synthesis. This Prochlorococcus marinus (strain SARG / CCMP1375 / SS120) protein is Thymidylate kinase.